We begin with the raw amino-acid sequence, 312 residues long: Ribosomal protein L11 methyltransferase (312 aa).

S-adenosyl-L-methionine contacts are provided by T162, G183, D205, and N248.

Belongs to the methyltransferase superfamily. PrmA family.

The protein resides in the cytoplasm. It carries out the reaction L-lysyl-[protein] + 3 S-adenosyl-L-methionine = N(6),N(6),N(6)-trimethyl-L-lysyl-[protein] + 3 S-adenosyl-L-homocysteine + 3 H(+). Its function is as follows. Methylates ribosomal protein L11. In Geobacillus thermodenitrificans (strain NG80-2), this protein is Ribosomal protein L11 methyltransferase.